Consider the following 190-residue polypeptide: MSSVQSKILSQAPSELELQVAKTFIDLESSSPELKADLRPLQIKSIREIDVTGGKKALVLFVPVPALSAYHKVQTKLTRELEKKFPDRHVIFLAERRILPKPSRTSRQVQKRPRSRTLTAVHDKVLEDMVFPTEIVGKRVRYLVGGNKIQKVLLDSKDVQQIDYKLESFQAVYNKLTGKQIVFEIPSQTN.

The residue at position 2 (S2) is an N-acetylserine. S10 and S31 each carry phosphoserine. Residues K83 and K84 each participate in a glycyl lysine isopeptide (Lys-Gly) (interchain with G-Cter in ubiquitin) cross-link.

The protein belongs to the eukaryotic ribosomal protein eS7 family. Component of the small ribosomal subunit (SSU). Mature yeast ribosomes consist of a small (40S) and a large (60S) subunit. The 40S small subunit contains 1 molecule of ribosomal RNA (18S rRNA) and 33 different proteins (encoded by 57 genes). The large 60S subunit contains 3 rRNA molecules (25S, 5.8S and 5S rRNA) and 46 different proteins (encoded by 81 genes). Interacts with snoRNA U3. uS11 interacts with MPP10. Component of the ribosomal small subunit (SSU) processome composed of at least 40 protein subunits and snoRNA U3. Post-translationally, N-terminally acetylated by acetyltransferase NatA. In terms of processing, ubiquitinated at Lys-83 and Lys-84 in response to stalled ribosomes, leading to activation of the No-Go Decay (NGD) pathway: first monoubiquitinated by MOT2/NOT4, followed by formation by HEL2 of 'Lys-63'-linked polyubiquitin chains on monoubiquitin.

Its subcellular location is the cytoplasm. It localises to the nucleus. It is found in the nucleolus. Component of the ribosome, a large ribonucleoprotein complex responsible for the synthesis of proteins in the cell. The small ribosomal subunit (SSU) binds messenger RNAs (mRNAs) and translates the encoded message by selecting cognate aminoacyl-transfer RNA (tRNA) molecules. The large subunit (LSU) contains the ribosomal catalytic site termed the peptidyl transferase center (PTC), which catalyzes the formation of peptide bonds, thereby polymerizing the amino acids delivered by tRNAs into a polypeptide chain. The nascent polypeptides leave the ribosome through a tunnel in the LSU and interact with protein factors that function in enzymatic processing, targeting, and the membrane insertion of nascent chains at the exit of the ribosomal tunnel. eS7 is involved in nucleolar processing of pre-18S ribosomal RNA and ribosome assembly. The polypeptide is Small ribosomal subunit protein eS7B (Saccharomyces cerevisiae (strain ATCC 204508 / S288c) (Baker's yeast)).